The following is an 837-amino-acid chain: SLIT and NTRK-like protein 4 (837 aa).

Residues M1–A18 form the signal peptide. Over D19–S618 the chain is Extracellular. LRR repeat units follow at residues N60 to N81, H84 to G105, A108 to G129, N132 to K153, K156 to F177, and S179 to E200. N81 carries N-linked (GlcNAc...) asparagine glycosylation. Residues N213–M264 form the LRRCT 1 domain. N-linked (GlcNAc...) asparagine glycosylation occurs at N325. One can recognise an LRRNT domain in the interval Q333–K375. LRR repeat units lie at residues N378 to E399, G402 to N423, N426 to G447, N450 to S471, N474 to G495, and P497 to D518. An N-linked (GlcNAc...) asparagine glycan is attached at N423. Residues N531 to K582 enclose the LRRCT 2 domain. The chain crosses the membrane as a helical span at residues I619 to L639. The Cytoplasmic portion of the chain corresponds to V640 to I837.

It belongs to the SLITRK family. As to quaternary structure, interacts (via LRR 1 and 2 repeats) with PTPRD (via extracellular domain). In the adult, significant expression is detected only in the brain. Broadly expressed in embryonic brain with highest expression in subventricular zone, subplate, cortical plate, pyramidal cell layer of hippocampus, thalamus and hypothalamus.

It localises to the membrane. The protein localises to the cell membrane. Its function is as follows. It is involved in synaptogenesis and promotes synapse differentiation. Suppresses neurite outgrowth. The protein is SLIT and NTRK-like protein 4 (Slitrk4) of Mus musculus (Mouse).